Consider the following 134-residue polypeptide: ATP synthase epsilon chain, chloroplastic (134 aa).

Belongs to the ATPase epsilon chain family. F-type ATPases have 2 components, CF(1) - the catalytic core - and CF(0) - the membrane proton channel. CF(1) has five subunits: alpha(3), beta(3), gamma(1), delta(1), epsilon(1). CF(0) has three main subunits: a, b and c.

The protein localises to the plastid. The protein resides in the chloroplast thylakoid membrane. In terms of biological role, produces ATP from ADP in the presence of a proton gradient across the membrane. The sequence is that of ATP synthase epsilon chain, chloroplastic from Pelargonium hortorum (Common geranium).